A 258-amino-acid chain; its full sequence is Alcohol dehydrogenase 2 (258 aa).

An NAD(+)-binding site is contributed by 9-33 (IFVGGLGFIGYEACKQLMAKNMASF). Serine 137 is a binding site for substrate. The active-site Proton acceptor is tyrosine 150.

Belongs to the short-chain dehydrogenases/reductases (SDR) family. Homodimer.

It catalyses the reaction a primary alcohol + NAD(+) = an aldehyde + NADH + H(+). The enzyme catalyses a secondary alcohol + NAD(+) = a ketone + NADH + H(+). The chain is Alcohol dehydrogenase 2 (ADH2) from Ceratitis cosyra (Mango fruit fly).